A 567-amino-acid polypeptide reads, in one-letter code: Thiol:disulfide interchange protein DsbD (567 aa).

The N-terminal stretch at 1–19 (MAQRIFTLILLLCSTSAFA) is a signal peptide. 2 disulfides stabilise this stretch: Cys-122–Cys-128 and Cys-185–Cys-307. 7 consecutive transmembrane segments (helical) span residues 170–192 (ALWA…MYPL), 212–234 (LAFI…VAAA), 246–268 (YVLI…LFTL), 297–319 (GAIA…LLYI), 326–348 (WLGG…LVTV), 358–380 (GPWM…VFLL), and 387–409 (AWGL…ITSL). The region spanning 435 to 567 (QDWAFGSPSA…FSAHLHDRQP (133 aa)) is the Thioredoxin domain. A disulfide bridge links Cys-482 with Cys-485.

Belongs to the thioredoxin family. DsbD subfamily.

It is found in the cell inner membrane. It carries out the reaction [protein]-dithiol + NAD(+) = [protein]-disulfide + NADH + H(+). The enzyme catalyses [protein]-dithiol + NADP(+) = [protein]-disulfide + NADPH + H(+). Required to facilitate the formation of correct disulfide bonds in some periplasmic proteins and for the assembly of the periplasmic c-type cytochromes. Acts by transferring electrons from cytoplasmic thioredoxin to the periplasm. This transfer involves a cascade of disulfide bond formation and reduction steps. This Salmonella typhimurium (strain LT2 / SGSC1412 / ATCC 700720) protein is Thiol:disulfide interchange protein DsbD.